We begin with the raw amino-acid sequence, 422 residues long: Retinoic acid receptor RXR-beta-B (422 aa).

The interval 1 to 89 (MNSLPPSTSA…SGPMLSQKRM (89 aa)) is modulating. 2 consecutive NR C4-type zinc fingers follow at residues 90-110 (CAIC…CEGC) and 126-150 (CRDN…YQKC). Residues 90-155 (CAICGDRSSG…RYQKCLAMGM (66 aa)) constitute a DNA-binding region (nuclear receptor). The tract at residues 156–178 (KREAVQEERQKNKERDGDYECSS) is hinge. The span at 161 to 173 (QEERQKNKERDGD) shows a compositional bias: basic and acidic residues. The segment at 161–182 (QEERQKNKERDGDYECSSSANE) is disordered. In terms of domain architecture, NR LBD spans 181-421 (NEEMPVEKIL…TFLMEMLESP (241 aa)).

It belongs to the nuclear hormone receptor family. NR2 subfamily. As to quaternary structure, homodimer. Heterodimer; with a rar molecule. Binds DNA preferentially as a rar/rxr heterodimer. Heterodimerizes with rarga. Shows uniform expression from the blastula to mid-gastrula stages. At 12 hours post-fertilization (hpf), expressed ubiquitously but more weakly. At 24 hpf, restricted to the ventral diencephalon, pharangeal endoderm and trunk and tail mesoderm; mesoderm expression is in medial cells of each somite along the dorsoventral axis, forming stripes. At 48 hpf, expressed in forebrain, eye, midbrain and anterior hindbrain.

It is found in the nucleus. Functionally, receptor for retinoic acid. Retinoic acid receptors bind as heterodimers to their target response elements in response to their ligands, all-trans or 9-cis retinoic acid, and regulate gene expression in various biological processes. The rar/rxr heterodimers bind to the retinoic acid response elements (RARE) composed of tandem 5'-AGGTCA-3' sites known as DR1-DR5. The high affinity ligand for rxrs is 9-cis retinoic acid. This is Retinoic acid receptor RXR-beta-B (rxrbb) from Danio rerio (Zebrafish).